Reading from the N-terminus, the 529-residue chain is Bifunctional purine biosynthesis protein PurH (529 aa).

Residues 1–148 form the MGS-like domain; the sequence is MQQRRPVRRA…KNHKDVAIVV (148 aa). Lys287 is subject to N6-acetyllysine.

This sequence belongs to the PurH family.

The enzyme catalyses (6R)-10-formyltetrahydrofolate + 5-amino-1-(5-phospho-beta-D-ribosyl)imidazole-4-carboxamide = 5-formamido-1-(5-phospho-D-ribosyl)imidazole-4-carboxamide + (6S)-5,6,7,8-tetrahydrofolate. It carries out the reaction IMP + H2O = 5-formamido-1-(5-phospho-D-ribosyl)imidazole-4-carboxamide. It functions in the pathway purine metabolism; IMP biosynthesis via de novo pathway; 5-formamido-1-(5-phospho-D-ribosyl)imidazole-4-carboxamide from 5-amino-1-(5-phospho-D-ribosyl)imidazole-4-carboxamide (10-formyl THF route): step 1/1. Its pathway is purine metabolism; IMP biosynthesis via de novo pathway; IMP from 5-formamido-1-(5-phospho-D-ribosyl)imidazole-4-carboxamide: step 1/1. The polypeptide is Bifunctional purine biosynthesis protein PurH (Escherichia coli O8 (strain IAI1)).